Consider the following 130-residue polypeptide: Calcium-binding protein KRP1 (130 aa).

Residues 72–107 (LTDEDVRCMIKEGDFDCDGALNQMEFCVLMFRLSPD) enclose the EF-hand domain. The Ca(2+) site is built by Asp85, Asp87, Asp89, and Glu96.

In terms of biological role, potential calcium sensor that binds calcium in vitro. This Arabidopsis thaliana (Mouse-ear cress) protein is Calcium-binding protein KRP1.